The chain runs to 200 residues: dITP/XTP pyrophosphatase (200 aa).

8 to 13 contributes to the substrate binding site; sequence TRNAGK. Aspartate 72 (proton acceptor) is an active-site residue. Mg(2+) is bound at residue aspartate 72. Substrate contacts are provided by residues serine 73, 155–158, lysine 178, and 183–184; these read FGYD and HR.

Belongs to the HAM1 NTPase family. Homodimer. Requires Mg(2+) as cofactor.

It carries out the reaction XTP + H2O = XMP + diphosphate + H(+). The catalysed reaction is dITP + H2O = dIMP + diphosphate + H(+). The enzyme catalyses ITP + H2O = IMP + diphosphate + H(+). Functionally, pyrophosphatase that catalyzes the hydrolysis of nucleoside triphosphates to their monophosphate derivatives, with a high preference for the non-canonical purine nucleotides XTP (xanthosine triphosphate), dITP (deoxyinosine triphosphate) and ITP. Seems to function as a house-cleaning enzyme that removes non-canonical purine nucleotides from the nucleotide pool, thus preventing their incorporation into DNA/RNA and avoiding chromosomal lesions. In Streptomyces avermitilis (strain ATCC 31267 / DSM 46492 / JCM 5070 / NBRC 14893 / NCIMB 12804 / NRRL 8165 / MA-4680), this protein is dITP/XTP pyrophosphatase.